The chain runs to 201 residues: UPF0301 protein Mvan_6057 (201 aa).

This sequence belongs to the UPF0301 (AlgH) family.

This Mycolicibacterium vanbaalenii (strain DSM 7251 / JCM 13017 / BCRC 16820 / KCTC 9966 / NRRL B-24157 / PYR-1) (Mycobacterium vanbaalenii) protein is UPF0301 protein Mvan_6057.